Here is an 874-residue protein sequence, read N- to C-terminus: Pyruvate, phosphate dikinase (874 aa).

The tract at residues Ala-2–Lys-340 is N-terminal. ATP is bound at residue Arg-92. Residues Lys-340–Ser-399 form a linker 1 region. The interval Pro-400–Leu-498 is central. The residue at position 453 (Thr-453) is a Phosphothreonine; by PDRP1. His-455 (tele-phosphohistidine intermediate) is an active-site residue. The segment at Asp-499–Thr-533 is linker 2. A C-terminal region spans residues Leu-534–Lys-874. Substrate contacts are provided by Arg-561, Arg-617, Glu-745, Gly-766, Thr-767, Asn-768, and Asp-769. Position 745 (Glu-745) interacts with Mg(2+). A Mg(2+)-binding site is contributed by Asp-769. Residue Cys-831 is the Proton donor of the active site.

Belongs to the PEP-utilizing enzyme family. As to quaternary structure, homodimer. The cofactor is Mg(2+). Phosphorylation of Thr-453 in the dark inactivates the enzyme. Dephosphorylation upon light stimulation reactivates the enzyme.

It carries out the reaction pyruvate + phosphate + ATP = phosphoenolpyruvate + AMP + diphosphate + H(+). Activated by light-induced dephosphorylation. Inhibited by dark-induced phosphorylation. Both reactions are catalyzed by PDRP1. Catalyzes the reversible phosphorylation of pyruvate and phosphate. In E.histolytica and C.symbiosus, PPDK functions in the direction of ATP synthesis. The chain is Pyruvate, phosphate dikinase (ppdK) from Clostridium symbiosum (Bacteroides symbiosus).